The chain runs to 62 residues: Large ribosomal subunit protein uL30 (62 aa).

The protein belongs to the universal ribosomal protein uL30 family. As to quaternary structure, part of the 50S ribosomal subunit.

The polypeptide is Large ribosomal subunit protein uL30 (Pseudoalteromonas atlantica (strain T6c / ATCC BAA-1087)).